Consider the following 137-residue polypeptide: Glutaredoxin-C9 (137 aa).

A Glutaredoxin domain is found at 32–136 (GERVRMVVEE…PILKEVGALW (105 aa)). Cys52 and Cys55 are joined by a disulfide. Positions 134–137 (ALWL) match the Responsive for interaction with TGA factors motif.

Belongs to the glutaredoxin family. CC-type subfamily. In terms of assembly, interacts with TGA2 and TGA6.

It is found in the cytoplasm. The protein localises to the nucleus. In terms of biological role, has a glutathione-disulfide oxidoreductase activity in the presence of NADPH and glutathione reductase. Reduces low molecular weight disulfides and proteins. The sequence is that of Glutaredoxin-C9 (GRXC9) from Arabidopsis thaliana (Mouse-ear cress).